The chain runs to 74 residues: uncharacterized protein (74 aa).

A run of 2 helical transmembrane segments spans residues 3 to 23 and 35 to 55; these read YSAL…CFSF and ILFF…MLLT.

The protein resides in the cell membrane. This is an uncharacterized protein from Mycoplasma genitalium (strain ATCC 33530 / DSM 19775 / NCTC 10195 / G37) (Mycoplasmoides genitalium).